We begin with the raw amino-acid sequence, 382 residues long: ADP,ATP carrier protein, mitochondrial (382 aa).

Residues 1–71 (MAEQANQPTV…PMMSSSPIFA (71 aa)) constitute a mitochondrion transit peptide. 3 Solcar repeats span residues 80–173 (KNFM…FKRL), 185–277 (KWFG…LKPV), and 285–371 (DNFF…LQIL). 5 helical membrane-spanning segments follow: residues 82–109 (FMIDFLMGGVSAAVSKTAAAPIERVKLL), 150–174 (TANVIRYFPTQALNFAFKDYFKRLF), 183–203 (YWKWFGGNLASGGAAGASSLF), 253–274 (FNISCVGIIVYRGLYFGMYDSL), and 288–308 (FASFALGWLITNGAGLASYPI). Positions 155 and 167 each coordinate ADP. ADP is bound at residue R312. An important for transport activity region spans residues 312–317 (RRRMMM). Positions 312–317 (RRRMMM) match the Nucleotide carrier signature motif motif. Residues 348–368 (AGANILRAIAGAGVLSGYDQL) form a helical membrane-spanning segment.

It belongs to the mitochondrial carrier (TC 2.A.29) family. In terms of assembly, monomer.

The protein localises to the mitochondrion inner membrane. It catalyses the reaction ADP(in) + ATP(out) = ADP(out) + ATP(in). With respect to regulation, the matrix-open state (m-state) is inhibited by the membrane-permeable bongkrekic acid (BKA). The cytoplasmic-open state (c-state) is inhibited by the membrane-impermeable toxic inhibitor carboxyatractyloside (CATR). ADP:ATP antiporter that mediates import of ADP into the mitochondrial matrix for ATP synthesis, and export of ATP out to fuel the cell. Cycles between the cytoplasmic-open state (c-state) and the matrix-open state (m-state): operates by the alternating access mechanism with a single substrate-binding site intermittently exposed to either the cytosolic (c-state) or matrix (m-state) side of the inner mitochondrial membrane. This chain is ADP,ATP carrier protein, mitochondrial, found in Oryza sativa subsp. japonica (Rice).